The sequence spans 469 residues: MELISPTVIIILGCLALFLLLQRKNLRRPPCIKGWIPWIGVGFEFGKAPLEFIEKARIKYGPIFTVFAMGNRMTFVTEEEGINVFLKSKKVDFELAVQNIVYRTASIPKNVFLALHEKLYIMLKGKMGTVNLHQFTGQLTEELHEQLENLGTHGTMDLNNLVRHLLYPVTVNMLFNKSLFSTNKKKIKEFHQYFQVYDEDFEYGSQLPECLLRNWSKSKKWFLELFEKNIPDIKACKSAKDNSMTLLQATLDIVETETSKENSPNYGLLLLWASLSNAVPVAFWTLAYVLSHPDIHKAIMEGISSVFGKAGKDKIKVSEDDLENLLLIKWCVLETIRLKAPGVITRKVVKPVEILNYIIPSGDLLMLSPFWLHRNPKYFPEPELFKPERWKKANLEKHSFLDCFMAFGSGKFQCPARWFALLEVQMCIILILYKYDCSLLDPLPKQSYLHLVGVPQPEGQCRIEYKQRI.

The first 23 residues, Met1 to Arg23, serve as a signal peptide directing secretion. A run of 3 helical transmembrane segments spans residues Gly267–Ala287, Val352–Leu372, and Phe412–Leu432. Cys414 provides a ligand contact to heme.

This sequence belongs to the cytochrome P450 family. Heme serves as cofactor. In terms of tissue distribution, liver specific.

Its subcellular location is the endoplasmic reticulum membrane. It is found in the microsome membrane. It carries out the reaction (24S)-hydroxycholesterol + reduced [NADPH--hemoprotein reductase] + O2 = (24S)-7alpha-dihydroxycholesterol + oxidized [NADPH--hemoprotein reductase] + H2O + H(+). The protein operates within steroid metabolism; cholesterol degradation. Its pathway is lipid metabolism; bile acid biosynthesis. Functionally, a cytochrome P450 monooxygenase involved in neural cholesterol clearance through bile acid synthesis. Catalyzes 7-alpha hydroxylation of (24S)-hydroxycholesterol, a neural oxysterol that is metabolized to bile acids in the liver. Mechanistically, uses molecular oxygen inserting one oxygen atom into a substrate, and reducing the second into a water molecule, with two electrons provided by NADPH via cytochrome P450 reductase (CPR; NADPH-ferrihemoprotein reductase). The sequence is that of 24-hydroxycholesterol 7-alpha-hydroxylase from Homo sapiens (Human).